The primary structure comprises 327 residues: Protein UL95 homolog (327 aa).

The protein belongs to the herpesviridae UL95 family. Interacts with ORF24; this interaction may serve as a core scaffold for the assembly of the viral transcription initiation complex. Interacts with ORF66. Interacts with ORF18. Interacts with ORF23. Interacts with ORF31. Interacts with host EPAS1; this interaction stabilizes host EPAS1, ensuring its transcriptional activity.

Its subcellular location is the host nucleus. Its function is as follows. Participates in the expression of late viral mRNAs in part by interacting with ORF24. Expressed before viral DNA replication, assembles at the viral pre-replication complexes (pre-RCs) and thus serves as a hub for recruiting a viral transcription complex to ORF24 to promote late viral gene expression. Also plays a regulatory role in the viral life cycle by regulating host transcriptional regulators HIF1A and EPAS1. This Homo sapiens (Human) protein is Protein UL95 homolog (ORF34).